We begin with the raw amino-acid sequence, 402 residues long: Acetate kinase (402 aa).

Mg(2+) is bound at residue Asn-7. Lys-14 lines the ATP pocket. Substrate is bound at residue Arg-95. The active-site Proton donor/acceptor is the Asp-152. ATP is bound by residues 212-216 (HLGNG), 286-288 (DMR), and 334-338 (GIGEN). Glu-388 lines the Mg(2+) pocket.

The protein belongs to the acetokinase family. As to quaternary structure, homodimer. Mg(2+) is required as a cofactor. It depends on Mn(2+) as a cofactor.

The protein resides in the cytoplasm. It carries out the reaction acetate + ATP = acetyl phosphate + ADP. Its pathway is metabolic intermediate biosynthesis; acetyl-CoA biosynthesis; acetyl-CoA from acetate: step 1/2. Its function is as follows. Catalyzes the formation of acetyl phosphate from acetate and ATP. Can also catalyze the reverse reaction. The polypeptide is Acetate kinase (Nitratidesulfovibrio vulgaris (strain ATCC 29579 / DSM 644 / CCUG 34227 / NCIMB 8303 / VKM B-1760 / Hildenborough) (Desulfovibrio vulgaris)).